Here is a 202-residue protein sequence, read N- to C-terminus: Endothelin-1 (202 aa).

A signal peptide spans 1 to 25; it reads MDYFPMIFALLFVAFQGAPEAAVLG. The propeptide occupies 26–50; that stretch reads TELSAGAEDGGEKPAPATPWRPRRS. 2 cysteine pairs are disulfide-bonded: cysteine 53/cysteine 67 and cysteine 55/cysteine 63. A propeptide spanning residues 74–202 is cleaved from the precursor; sequence VNTPEHVVPY…DKKVIYNRAH (129 aa). The tract at residues 110-124 is endothelin-like; sequence CQCASQTDKKCWNFC.

Belongs to the endothelin/sarafotoxin family.

The protein localises to the secreted. Endothelins are endothelium-derived vasoconstrictor peptides. Probable ligand for G-protein coupled receptors EDNRA and EDNRB which activates PTK2B, BCAR1, BCAR3 and, GTPases RAP1 and RHOA cascade in glomerular mesangial cells. Also binds the DEAR/FBXW7-AS1 receptor. Promotes mesenteric arterial wall remodeling via activation of ROCK signaling and subsequent colocalization of NFATC3 with F-actin filaments. NFATC3 then translocates to the nucleus where it subsequently promotes the transcription of the smooth muscle hypertrophy and differentiation marker ACTA2. This Bos taurus (Bovine) protein is Endothelin-1 (EDN1).